A 400-amino-acid polypeptide reads, in one-letter code: Protein phosphatase methylesterase 1 (400 aa).

Residues 32-70 (DENDGDALGSLPSFNGQSNRNRKYTGKTGSTTDRISSKE) form a disordered region. An AB hydrolase-1 domain is found at 114 to 365 (PIFIFHHGAG…DSGHFIQEDS (252 aa)). Catalysis depends on residues serine 205, aspartate 233, and histidine 359.

The protein belongs to the AB hydrolase superfamily. As to quaternary structure, interacts with and inactivates the phosphatase PP2A-like catalytic subunits PPG1, PPH21, PPH22, PPH3 and SIT4.

It catalyses the reaction [phosphatase 2A protein]-C-terminal L-leucine methyl ester + H2O = [phosphatase 2A protein]-C-terminal L-leucine + methanol + H(+). Functionally, demethylates proteins that have been reversibly carboxymethylated. Demethylates the phosphatase PP2A catalytic subunits PPH21 and PPH22. Forms inactive complexes (PP2Ai) with phosphatase PP2A-like catalytic subunits. Involved in the regulation of cell cycle progression at START. This is Protein phosphatase methylesterase 1 (PPE1) from Saccharomyces cerevisiae (strain ATCC 204508 / S288c) (Baker's yeast).